A 319-amino-acid chain; its full sequence is Acetyl-coenzyme A carboxylase carboxyl transferase subunit alpha (319 aa).

The CoA carboxyltransferase C-terminal domain maps to 32–293 (NVETEVRALR…KAVLLNELDA (262 aa)).

This sequence belongs to the AccA family. As to quaternary structure, acetyl-CoA carboxylase is a heterohexamer composed of biotin carboxyl carrier protein (AccB), biotin carboxylase (AccC) and two subunits each of ACCase subunit alpha (AccA) and ACCase subunit beta (AccD).

The protein localises to the cytoplasm. It carries out the reaction N(6)-carboxybiotinyl-L-lysyl-[protein] + acetyl-CoA = N(6)-biotinyl-L-lysyl-[protein] + malonyl-CoA. It functions in the pathway lipid metabolism; malonyl-CoA biosynthesis; malonyl-CoA from acetyl-CoA: step 1/1. In terms of biological role, component of the acetyl coenzyme A carboxylase (ACC) complex. First, biotin carboxylase catalyzes the carboxylation of biotin on its carrier protein (BCCP) and then the CO(2) group is transferred by the carboxyltransferase to acetyl-CoA to form malonyl-CoA. The chain is Acetyl-coenzyme A carboxylase carboxyl transferase subunit alpha from Xanthomonas oryzae pv. oryzae (strain MAFF 311018).